A 941-amino-acid polypeptide reads, in one-letter code: Cilia- and flagella-associated protein 69 (941 aa).

The protein localises to the cell projection. The protein resides in the cilium. Its subcellular location is the flagellum. Cilium- and flagellum-associated protein. In the olfactory epithelium, regulates the speed of activation and termination of the odor response and thus contributes to the robustness of olfactory transduction pathways. Required for sperm flagellum assembly and stability. The protein is Cilia- and flagella-associated protein 69 of Callithrix jacchus (White-tufted-ear marmoset).